A 95-amino-acid polypeptide reads, in one-letter code: Histone-like DNA-binding protein (95 aa).

The protein belongs to the bacterial histone-like protein family.

This chain is Histone-like DNA-binding protein, found in Rickettsia felis (strain ATCC VR-1525 / URRWXCal2) (Rickettsia azadi).